The primary structure comprises 155 residues: Myosin light chain alkali (155 aa).

EF-hand domains follow at residues 7–41 (REVENVEFVFEVMGSPGEGIDAVDLGDALRALNLN) and 80–115 (GCYEDFIECLKLYDKEENGTMMLAELQHALLALGES).

As to quaternary structure, myosin is a hexamer of 2 heavy chains and 4 light chains.

This Drosophila simulans (Fruit fly) protein is Myosin light chain alkali (Mlc1).